The primary structure comprises 153 residues: Endoribonuclease YbeY (153 aa).

Zn(2+) contacts are provided by histidine 115, histidine 119, and histidine 125.

It belongs to the endoribonuclease YbeY family. Zn(2+) is required as a cofactor.

The protein resides in the cytoplasm. Its function is as follows. Single strand-specific metallo-endoribonuclease involved in late-stage 70S ribosome quality control and in maturation of the 3' terminus of the 16S rRNA. This Blochmanniella floridana protein is Endoribonuclease YbeY.